Here is a 556-residue protein sequence, read N- to C-terminus: Arginine--tRNA ligase (556 aa).

Positions 132–142 (ANPTGDLHLGH) match the 'HIGH' region motif.

Belongs to the class-I aminoacyl-tRNA synthetase family. Monomer.

The protein localises to the cytoplasm. It catalyses the reaction tRNA(Arg) + L-arginine + ATP = L-arginyl-tRNA(Arg) + AMP + diphosphate. The sequence is that of Arginine--tRNA ligase from Listeria monocytogenes serovar 1/2a (strain ATCC BAA-679 / EGD-e).